Here is an 83-residue protein sequence, read N- to C-terminus: Cytochrome b559 subunit alpha (83 aa).

Residues 21–35 (VIHSITIPSLFIAGW) form a helical membrane-spanning segment. His23 contacts heme.

Belongs to the PsbE/PsbF family. As to quaternary structure, heterodimer of an alpha subunit and a beta subunit. PSII is composed of 1 copy each of membrane proteins PsbA, PsbB, PsbC, PsbD, PsbE, PsbF, PsbH, PsbI, PsbJ, PsbK, PsbL, PsbM, PsbT, PsbX, PsbY, PsbZ, Psb30/Ycf12, at least 3 peripheral proteins of the oxygen-evolving complex and a large number of cofactors. It forms dimeric complexes. Requires heme b as cofactor.

It is found in the plastid. The protein localises to the chloroplast thylakoid membrane. In terms of biological role, this b-type cytochrome is tightly associated with the reaction center of photosystem II (PSII). PSII is a light-driven water:plastoquinone oxidoreductase that uses light energy to abstract electrons from H(2)O, generating O(2) and a proton gradient subsequently used for ATP formation. It consists of a core antenna complex that captures photons, and an electron transfer chain that converts photonic excitation into a charge separation. In Daucus carota (Wild carrot), this protein is Cytochrome b559 subunit alpha.